Consider the following 111-residue polypeptide: Probable 4-amino-4-deoxy-L-arabinose-phosphoundecaprenol flippase subunit ArnE (111 aa).

Residues 1 to 35 (MIWLTLVFASLLSVAGQLCQKQATCFATVNKRRKH) are Cytoplasmic-facing. A helical membrane pass occupies residues 36-56 (IVLWLGLALACLGLAMVLWLL). Residues 40–109 (LGLALACLGL…IIGGIVILGS (70 aa)) form the EamA domain. Over 57 to 60 (VLQN) the chain is Periplasmic. Residues 61 to 81 (VPVGIAYPMLSLNFVWVTLAA) form a helical membrane-spanning segment. The Cytoplasmic portion of the chain corresponds to 82-87 (VKLWHE). Residues 88 to 108 (PVSLRHWCGVAFIIGGIVILG) traverse the membrane as a helical segment. The Periplasmic portion of the chain corresponds to 109 to 111 (STV).

The protein belongs to the ArnE family. As to quaternary structure, heterodimer of ArnE and ArnF.

It is found in the cell inner membrane. It participates in bacterial outer membrane biogenesis; lipopolysaccharide biosynthesis. Functionally, translocates 4-amino-4-deoxy-L-arabinose-phosphoundecaprenol (alpha-L-Ara4N-phosphoundecaprenol) from the cytoplasmic to the periplasmic side of the inner membrane. The chain is Probable 4-amino-4-deoxy-L-arabinose-phosphoundecaprenol flippase subunit ArnE from Escherichia coli O6:H1 (strain CFT073 / ATCC 700928 / UPEC).